A 424-amino-acid polypeptide reads, in one-letter code: Putative histone deacetylase complex subunit cti6 (424 aa).

Disordered stretches follow at residues 1–49, 117–155, 170–341, and 381–405; these read MPSN…GEVT, SKYL…TMNS, KEKS…PDGT, and AQSA…ETLR. Residues 48–103 form a PHD-type zinc finger; the sequence is VTRCVCGIVESDDEASDGGLYIQCDQCSVWQHGNCVGFADESEVPEVYYCEICHPE. A compositionally biased stretch (low complexity) spans 127–137; sequence EASQTEESSST. Residue Ser187 is modified to Phosphoserine. A compositionally biased stretch (acidic residues) spans 241-256; sequence DAPEEETVDTVEEIAD. A compositionally biased stretch (basic and acidic residues) spans 257 to 266; the sequence is EEKHSVKEES. Positions 272–287 are enriched in low complexity; the sequence is QSSQQSTITSISTTTR. Residues 294–303 are compositionally biased toward basic and acidic residues; sequence REAAAEDKAD. The segment covering 313–324 has biased composition (basic residues); sequence SKTRKVGGRRGK. The segment covering 392–405 has biased composition (basic and acidic residues); the sequence is SSKEGPEEEKETLR.

The protein resides in the cytoplasm. The protein localises to the nucleus. In terms of biological role, could be a component of the RPD3C(L) histone deacetylase complex (HDAC). This chain is Putative histone deacetylase complex subunit cti6 (cti6), found in Schizosaccharomyces pombe (strain 972 / ATCC 24843) (Fission yeast).